A 303-amino-acid polypeptide reads, in one-letter code: 4-diphosphocytidyl-2-C-methyl-D-erythritol kinase (303 aa).

The active site involves K21. 106 to 116 is a binding site for ATP; the sequence is PVAAGIGGGSA. Residue D148 is part of the active site.

Belongs to the GHMP kinase family. IspE subfamily.

The catalysed reaction is 4-CDP-2-C-methyl-D-erythritol + ATP = 4-CDP-2-C-methyl-D-erythritol 2-phosphate + ADP + H(+). Its pathway is isoprenoid biosynthesis; isopentenyl diphosphate biosynthesis via DXP pathway; isopentenyl diphosphate from 1-deoxy-D-xylulose 5-phosphate: step 3/6. Catalyzes the phosphorylation of the position 2 hydroxy group of 4-diphosphocytidyl-2C-methyl-D-erythritol. The polypeptide is 4-diphosphocytidyl-2-C-methyl-D-erythritol kinase (Nitrobacter hamburgensis (strain DSM 10229 / NCIMB 13809 / X14)).